The primary structure comprises 410 residues: Platelet-activating factor acetylhydrolase IB subunit alpha (410 aa).

Positions 1–38 (MVLSQRQRDELNRAIADYLRSNGYEEAYSVFKKEAELD) are required for self-association and interaction with PAFAH1B2 and PAFAH1B3. Positions 1-66 (MVLSQRQRDE…SVIRLQKKVM (66 aa)) are interaction with NDE1. The segment at 1–102 (MVLSQRQRDE…EWIPRPPEKY (102 aa)) is interaction with NDEL1. The region spanning 7-39 (QRDELNRAIADYLRSNGYEEAYSVFKKEAELDM) is the LisH domain. An N6-acetyllysine modification is found at K53. Residues 56-82 (TSVIRLQKKVMELESKLNEAKEEFTSG) adopt a coiled-coil conformation. The tract at residues 83 to 410 (GPLGQKRDPK…DQTVKVWECR (328 aa)) is interaction with dynein and dynactin. WD repeat units lie at residues 106 to 147 (GHRS…RTLK), 148 to 187 (GHTDSVQDISFDHSGKLLASCSADMTIKLWDFQGFECIRT), 190 to 229 (GHDHNVSSVAIMPNGDHIVSAARDKTIKMWEVQTGYCVKT), 232 to 271 (GHREWVRMVRPNQDGTLIASCSNDQTVRVWVVATKECKAE), 274 to 333 (EHEH…CLMT), 336 to 377 (GHDN…KTLN), and 378 to 410 (AHEHFVTSLDFHKTAPYVVTGSVDQTVKVWECR). Position 109 is a phosphoserine (S109). Residues 367-409 (YKNKRCMKTLNAHEHFVTSLDFHKTAPYVVTGSVDQTVKVWEC) are interaction with DCX. Residues 388-410 (FHKTAPYVVTGSVDQTVKVWECR) form an interaction with NDEL1 region.

It belongs to the WD repeat LIS1/nudF family. As to quaternary structure, can self-associate. Component of the cytosolic PAF-AH (I) heterotetrameric enzyme, which is composed of PAFAH1B1 (beta), PAFAH1B2 (alpha2) and PAFAH1B3 (alpha1) subunits. The catalytic activity of the enzyme resides in the alpha1 (PAFAH1B3) and alpha2 (PAFAH1B2) subunits, whereas the beta subunit (PAFAH1B1) has regulatory activity. Trimer formation is not essential for the catalytic activity. Interacts with the catalytic dimer of PAF-AH (I) heterotetrameric enzyme: interacts with PAFAH1B2 homodimer (alpha2/alpha2 homodimer), PAFAH1B3 homodimer (alpha1/alpha1 homodimer) and PAFAH1B2-PAFAH1B3 heterodimer (alpha2/alpha1 heterodimer). Interacts with DCX, dynein, dynactin, IQGAP1, KATNB1, NDE1, NDEL1, NUDC and RSN. Interacts with DISC1, and this interaction is enhanced by NDEL1. Interacts with DAB1 when DAB1 is phosphorylated in response to RELN/reelin signaling. Interacts with INTS13. Interacts with DCDC1.

It is found in the cytoplasm. Its subcellular location is the cytoskeleton. The protein localises to the microtubule organizing center. The protein resides in the centrosome. It localises to the spindle. It is found in the nucleus membrane. In terms of biological role, regulatory subunit (beta subunit) of the cytosolic type I platelet-activating factor (PAF) acetylhydrolase (PAF-AH (I)), an enzyme that catalyzes the hydrolyze of the acetyl group at the sn-2 position of PAF and its analogs and participates in PAF inactivation. Regulates the PAF-AH (I) activity in a catalytic dimer composition-dependent manner. Positively regulates the activity of the minus-end directed microtubule motor protein dynein. May enhance dynein-mediated microtubule sliding by targeting dynein to the microtubule plus end. Required for several dynein- and microtubule-dependent processes such as the maintenance of Golgi integrity, the peripheral transport of microtubule fragments and the coupling of the nucleus and centrosome. Required during brain development for the proliferation of neuronal precursors and the migration of newly formed neurons from the ventricular/subventricular zone toward the cortical plate. Neuronal migration involves a process called nucleokinesis, whereby migrating cells extend an anterior process into which the nucleus subsequently translocates. During nucleokinesis dynein at the nuclear surface may translocate the nucleus towards the centrosome by exerting force on centrosomal microtubules. Also required for proper activation of Rho GTPases and actin polymerization at the leading edge of locomoting cerebellar neurons and postmigratory hippocampal neurons in response to calcium influx triggered via NMDA receptors. May also play a role in other forms of cell locomotion including the migration of fibroblasts during wound healing. Required for dynein recruitment to microtubule plus ends and BICD2-bound cargos. May modulate the Reelin pathway through interaction of the PAF-AH (I) catalytic dimer with VLDLR. The polypeptide is Platelet-activating factor acetylhydrolase IB subunit alpha (Sus scrofa (Pig)).